The chain runs to 59 residues: Large ribosomal subunit protein bL32 (59 aa).

The segment at 1–20 (MAVQQNKKSRSRKGMRRSHD) is disordered. Over residues 7-19 (KKSRSRKGMRRSH) the composition is skewed to basic residues.

Belongs to the bacterial ribosomal protein bL32 family.

This Nitratidesulfovibrio vulgaris (strain ATCC 29579 / DSM 644 / CCUG 34227 / NCIMB 8303 / VKM B-1760 / Hildenborough) (Desulfovibrio vulgaris) protein is Large ribosomal subunit protein bL32.